A 234-amino-acid polypeptide reads, in one-letter code: UPF0502 protein BTH_II0990 (234 aa).

Belongs to the UPF0502 family.

This Burkholderia thailandensis (strain ATCC 700388 / DSM 13276 / CCUG 48851 / CIP 106301 / E264) protein is UPF0502 protein BTH_II0990.